A 225-amino-acid polypeptide reads, in one-letter code: Protein YIP4 (225 aa).

Ser-27 and Ser-28 each carry phosphoserine. The next 5 helical transmembrane spans lie at 91–111 (WDLWGPLIFSLVIALALALST), 118–138 (SVFTVVVALIWFGEAVCSLNI), 154–176 (LGYSSFPLMIASIVCAFVPLIFI), 180–199 (VIVAMYAWTLFAAMGVLQNS), and 205–225 (KLLAVYPLFLFYFSLAWIIFL).

The protein belongs to the YIP1 family. As to quaternary structure, interacts with the YIP1 family members yip1 and yip5, and with several Rab GTPases.

The protein localises to the membrane. May be involved in proper membrane localization of Rab GTPases. This is Protein YIP4 from Schizosaccharomyces pombe (strain 972 / ATCC 24843) (Fission yeast).